We begin with the raw amino-acid sequence, 1133 residues long: Error-prone DNA polymerase (1133 aa).

It belongs to the DNA polymerase type-C family. DnaE2 subfamily.

Its subcellular location is the cytoplasm. It carries out the reaction DNA(n) + a 2'-deoxyribonucleoside 5'-triphosphate = DNA(n+1) + diphosphate. Functionally, DNA polymerase involved in damage-induced mutagenesis and translesion synthesis (TLS). It is not the major replicative DNA polymerase. The protein is Error-prone DNA polymerase of Anaeromyxobacter sp. (strain K).